Consider the following 350-residue polypeptide: Pleckstrin (350 aa).

The 98-residue stretch at 4 to 101 (KRIREGYLVK…WVRDIKKAIK (98 aa)) folds into the PH 1 domain. Position 64 is an N6-acetyllysine (Lys-64). Ser-113 and Ser-117 each carry phosphoserine. The DEP domain occupies 136–221 (PEKGIKELNL…NPDAFYYFPD (86 aa)). A PH 2 domain is found at 244 to 347 (IIIKQGCLLK…WIKAIQVASR (104 aa)).

Functionally, major protein kinase C substrate of platelets. This is Pleckstrin (Plek) from Rattus norvegicus (Rat).